The chain runs to 409 residues: 2-methylfumaryl-CoA isomerase (409 aa).

Residue Asp-165 is the Nucleophile of the active site.

Belongs to the CoA-transferase III family. Mesaconyl-CoA isomerase subfamily. Homodimer.

It carries out the reaction 2-methylfumaryl-CoA = 3-methylfumaryl-CoA. With respect to regulation, partially inhibited by hydroxylamine. In terms of biological role, involved in the glyoxylate assimilation cycle used to regenerate acetyl-CoA and produce pyruvate as universal precursor for biosynthesis. This reaction involves an intramolecular CoA transferase that catalyzes the reversible transfer of the CoA moiety from the C1-carboxyl group of mesaconyl-CoA to the C4-carboxyl group. It does not require free mesaconate as CoA acceptor. This chain is 2-methylfumaryl-CoA isomerase (mct), found in Chloroflexus aurantiacus (strain ATCC 29366 / DSM 635 / J-10-fl).